Here is a 418-residue protein sequence, read N- to C-terminus: Metal tolerance protein 1 (418 aa).

The Cytoplasmic segment spans residues 1-56 (MDSHNSAPPQIAEVRMDISSSTSVAAGNKVCRGAACDFSDSSNSSKDARERMASMR). Residues 57–77 (KLIIAVILCIIFMAVEVVGGI) traverse the membrane as a helical segment. Residues 78 to 89 (KANSLAILTDAA) are Vacuolar-facing. A helical membrane pass occupies residues 90 to 110 (HLLSDVAAFAISLFSLWAAGW). Residues 111 to 122 (EATPQQSYGFFR) lie on the Cytoplasmic side of the membrane. The chain crosses the membrane as a helical span at residues 123-143 (IEILGALVSIQLIWLLAGILV). Topologically, residues 144–160 (YEAIVRLINESGEVQGS) are vacuolar. The chain crosses the membrane as a helical span at residues 161–181 (LMFAVSAFGLFVNIIMAVLLG). Positions 182 to 246 (HDHGHGHGHG…HHPGTGHHHH (65 aa)) are required for zinc-binding. The Cytoplasmic portion of the chain corresponds to 182-282 (HDHGHGHGHG…RRNINVHSAY (101 aa)). Residues 186-248 (HGHGHGHGHG…PGTGHHHHDA (63 aa)) form a disordered region. Residues 196–227 (HSHDHDHGGSDHDHHHHEDQEHGHVHHHEDGH) show a composition bias toward basic and acidic residues. Basic residues predominate over residues 235-245 (LHHHPGTGHHH). Residues 283–303 (LHVLGDSIQSIGVMIGGAIIW) form a helical membrane-spanning segment. Residues 304–307 (YKPE) are Vacuolar-facing. The chain crosses the membrane as a helical span at residues 308 to 328 (WKIIDLICTLIFSVIVLFTTI). Topologically, residues 329–418 (KMLRNILEVL…SHVTIQIERE (90 aa)) are cytoplasmic.

The protein belongs to the cation diffusion facilitator (CDF) transporter (TC 2.A.4) family. SLC30A subfamily.

The protein localises to the vacuole membrane. In terms of biological role, involved in sequestration of excess zinc in the cytoplasm into vacuoles to maintain zinc homeostasis. This Oryza sativa subsp. japonica (Rice) protein is Metal tolerance protein 1 (MTP1).